The primary structure comprises 213 residues: Kynurenine formamidase (213 aa).

Position 18 (W18) interacts with substrate. Residues H48, H52, and D54 each coordinate Zn(2+). The Proton donor/acceptor role is filled by H58. Residues H160 and E172 each coordinate Zn(2+).

Belongs to the Cyclase 1 superfamily. KynB family. Homodimer. It depends on Zn(2+) as a cofactor.

The catalysed reaction is N-formyl-L-kynurenine + H2O = L-kynurenine + formate + H(+). Its pathway is amino-acid degradation; L-tryptophan degradation via kynurenine pathway; L-kynurenine from L-tryptophan: step 2/2. Functionally, catalyzes the hydrolysis of N-formyl-L-kynurenine to L-kynurenine, the second step in the kynurenine pathway of tryptophan degradation. In Burkholderia thailandensis (strain ATCC 700388 / DSM 13276 / CCUG 48851 / CIP 106301 / E264), this protein is Kynurenine formamidase.